The following is a 161-amino-acid chain: Cytochrome c-type biogenesis protein CcmE (161 aa).

The Cytoplasmic portion of the chain corresponds to 1–8 (MNPRRKKR). Residues 9–29 (LGLILALFVGISATVGLMLYA) traverse the membrane as a helical; Signal-anchor for type II membrane protein segment. Residues 30–161 (LNQNMDLFYT…TEQQKQGTGQ (132 aa)) are Periplasmic-facing. The heme site is built by H129 and Y133. Positions 142–161 (MKKTHEPLQYTEQQKQGTGQ) are disordered. Over residues 151 to 161 (YTEQQKQGTGQ) the composition is skewed to polar residues.

The protein belongs to the CcmE/CycJ family.

The protein resides in the cell inner membrane. Heme chaperone required for the biogenesis of c-type cytochromes. Transiently binds heme delivered by CcmC and transfers the heme to apo-cytochromes in a process facilitated by CcmF and CcmH. The chain is Cytochrome c-type biogenesis protein CcmE from Aliivibrio fischeri (strain ATCC 700601 / ES114) (Vibrio fischeri).